Consider the following 30-residue polypeptide: Hemocyanin subunit 2 (30 aa).

This sequence belongs to the tyrosinase family. Hemocyanin subfamily. Hemolymph.

The protein localises to the secreted. The protein resides in the extracellular space. Functionally, hemocyanins are copper-containing oxygen carriers occurring freely dissolved in the hemolymph of many mollusks and arthropods. This chain is Hemocyanin subunit 2, found in Homarus americanus (American lobster).